The primary structure comprises 299 residues: 4-hydroxybenzoate octaprenyltransferase (299 aa).

The next 8 membrane-spanning stretches (helical) occupy residues 33 to 53, 56 to 76, 107 to 127, 151 to 171, 180 to 200, 214 to 234, 247 to 267, and 278 to 298; these read VGFLLLLWPTWWALWLAAGGV, WWTLCVFTTGIWLTRSAGCVI, LLMFATLMLIAFGLVLTMNQL, LPQVYLGLAFGWGIPMAFAAI, WLLYVANILWTTAYDTWCAMV, AILFADLDLTVQGVLYTLMLF, HTYWISLIAAVALIGYQFIIA, and AFMHNNWVGMTIFAGIALATT.

This sequence belongs to the UbiA prenyltransferase family. The cofactor is Mg(2+).

Its subcellular location is the cell inner membrane. The enzyme catalyses all-trans-octaprenyl diphosphate + 4-hydroxybenzoate = 4-hydroxy-3-(all-trans-octaprenyl)benzoate + diphosphate. It participates in cofactor biosynthesis; ubiquinone biosynthesis. Functionally, catalyzes the prenylation of para-hydroxybenzoate (PHB) with an all-trans polyprenyl group. Mediates the second step in the final reaction sequence of ubiquinone-8 (UQ-8) biosynthesis, which is the condensation of the polyisoprenoid side chain with PHB, generating the first membrane-bound Q intermediate 3-octaprenyl-4-hydroxybenzoate. The protein is 4-hydroxybenzoate octaprenyltransferase of Xylella fastidiosa (strain 9a5c).